Consider the following 232-residue polypeptide: Phosphatidylserine decarboxylase proenzyme (232 aa).

Ser-190 serves as the catalytic Schiff-base intermediate with substrate; via pyruvic acid. Pyruvic acid (Ser); by autocatalysis is present on Ser-190.

The protein belongs to the phosphatidylserine decarboxylase family. PSD-A subfamily. As to quaternary structure, heterodimer of a large membrane-associated beta subunit and a small pyruvoyl-containing alpha subunit. Pyruvate serves as cofactor. In terms of processing, is synthesized initially as an inactive proenzyme. Formation of the active enzyme involves a self-maturation process in which the active site pyruvoyl group is generated from an internal serine residue via an autocatalytic post-translational modification. Two non-identical subunits are generated from the proenzyme in this reaction, and the pyruvate is formed at the N-terminus of the alpha chain, which is derived from the carboxyl end of the proenzyme. The post-translation cleavage follows an unusual pathway, termed non-hydrolytic serinolysis, in which the side chain hydroxyl group of the serine supplies its oxygen atom to form the C-terminus of the beta chain, while the remainder of the serine residue undergoes an oxidative deamination to produce ammonia and the pyruvoyl prosthetic group on the alpha chain.

It is found in the cell membrane. It catalyses the reaction a 1,2-diacyl-sn-glycero-3-phospho-L-serine + H(+) = a 1,2-diacyl-sn-glycero-3-phosphoethanolamine + CO2. The protein operates within phospholipid metabolism; phosphatidylethanolamine biosynthesis; phosphatidylethanolamine from CDP-diacylglycerol: step 2/2. Functionally, catalyzes the formation of phosphatidylethanolamine (PtdEtn) from phosphatidylserine (PtdSer). The polypeptide is Phosphatidylserine decarboxylase proenzyme (Rhodopseudomonas palustris (strain HaA2)).